We begin with the raw amino-acid sequence, 465 residues long: Cysteine--tRNA ligase (465 aa).

Cys30 lines the Zn(2+) pocket. Residues 32–42 carry the 'HIGH' region motif; that stretch reads ITVYDYCHVGH. Zn(2+) is bound by residues Cys214, His239, and Glu243. Positions 271 to 275 match the 'KMSKS' region motif; sequence KMSKS. Lys274 contacts ATP.

It belongs to the class-I aminoacyl-tRNA synthetase family. In terms of assembly, monomer. Requires Zn(2+) as cofactor.

The protein resides in the cytoplasm. It catalyses the reaction tRNA(Cys) + L-cysteine + ATP = L-cysteinyl-tRNA(Cys) + AMP + diphosphate. This chain is Cysteine--tRNA ligase, found in Burkholderia ambifaria (strain MC40-6).